The following is a 182-amino-acid chain: NADH-quinone oxidoreductase subunit I (182 aa).

2 4Fe-4S ferredoxin-type domains span residues 52 to 82 (LTRD…LQKA) and 92 to 121 (EFFR…LTPD). [4Fe-4S] cluster-binding residues include Cys62, Cys65, Cys68, Cys72, Cys101, Cys104, Cys107, and Cys111.

This sequence belongs to the complex I 23 kDa subunit family. In terms of assembly, NDH-1 is composed of 13 different subunits. Subunits NuoA, H, J, K, L, M, N constitute the membrane sector of the complex. It depends on [4Fe-4S] cluster as a cofactor.

It localises to the cell inner membrane. It carries out the reaction a quinone + NADH + 5 H(+)(in) = a quinol + NAD(+) + 4 H(+)(out). Functionally, NDH-1 shuttles electrons from NADH, via FMN and iron-sulfur (Fe-S) centers, to quinones in the respiratory chain. The immediate electron acceptor for the enzyme in this species is believed to be ubiquinone. Couples the redox reaction to proton translocation (for every two electrons transferred, four hydrogen ions are translocated across the cytoplasmic membrane), and thus conserves the redox energy in a proton gradient. The chain is NADH-quinone oxidoreductase subunit I from Pseudomonas aeruginosa (strain LESB58).